We begin with the raw amino-acid sequence, 171 residues long: Co-chaperone protein HscB (171 aa).

Residues 2 to 74 (DYFTLFGLPA…LTRAEYLLSL (73 aa)) form the J domain.

The protein belongs to the HscB family. As to quaternary structure, interacts with HscA and stimulates its ATPase activity. Interacts with IscU.

Co-chaperone involved in the maturation of iron-sulfur cluster-containing proteins. Seems to help targeting proteins to be folded toward HscA. In Klebsiella pneumoniae (strain 342), this protein is Co-chaperone protein HscB.